The chain runs to 83 residues: Small ribosomal subunit protein eS27 (83 aa).

The C4-type zinc-finger motif lies at 37–59 (CPGCFNITTVFSHAQTVVICGSC).

The protein belongs to the eukaryotic ribosomal protein eS27 family. Component of the small ribosomal subunit (SSU). Mature yeast ribosomes consist of a small (40S) and a large (60S) subunit. The 40S small subunit contains 1 molecule of ribosomal RNA (18S rRNA) and at least 33 different proteins. The large 60S subunit contains 3 rRNA molecules (25S, 5.8S and 5S rRNA) and at least 46 different proteins. The cofactor is Zn(2+).

Its subcellular location is the cytoplasm. Component of the ribosome, a large ribonucleoprotein complex responsible for the synthesis of proteins in the cell. The small ribosomal subunit (SSU) binds messenger RNAs (mRNAs) and translates the encoded message by selecting cognate aminoacyl-transfer RNA (tRNA) molecules. The large subunit (LSU) contains the ribosomal catalytic site termed the peptidyl transferase center (PTC), which catalyzes the formation of peptide bonds, thereby polymerizing the amino acids delivered by tRNAs into a polypeptide chain. The nascent polypeptides leave the ribosome through a tunnel in the LSU and interact with protein factors that function in enzymatic processing, targeting, and the membrane insertion of nascent chains at the exit of the ribosomal tunnel. This chain is Small ribosomal subunit protein eS27 (rps27), found in Schizosaccharomyces pombe (strain 972 / ATCC 24843) (Fission yeast).